We begin with the raw amino-acid sequence, 503 residues long: Excitatory amino acid transporter (503 aa).

The Cytoplasmic portion of the chain corresponds to 1–18; that stretch reads MPPDTRINKEIMVSWIRK. 3 helical membrane-spanning segments follow: residues 19–39, 59–79, and 96–116; these read NLLLVLTVSSVVLGALCGFLL, LMHMLKMMILPLIMSSLISGL, and TYYMFTTAVAVVTGIFLVLVI. Residues 117–198 lie on the Extracellular side of the membrane; it reads HPGDPTIKKE…SLDYVKASVE (82 aa). N177 and N187 each carry an N-linked (GlcNAc...) asparagine glycan. 5 helical membrane passes run 199–219, 239–259, 281–301, 369–389, and 400–420; these read YTSGMNVLGVIVFCIAIGISL, VIMKLVMTVMWYSPFGIFCLI, VTVLSGLAIHSLISLPLIFFV, AVAAIFIAQINGVHLSFGQVV, and IGAASVPSAGLVTMLLVLTAV.

Belongs to the dicarboxylate/amino acid:cation symporter (DAACS) (TC 2.A.23) family.

It is found in the membrane. Functionally, transports L-glutamate and also L- and D-aspartate. Essential for terminating the postsynaptic action of glutamate by rapidly removing released glutamate from the synaptic cleft. Acts as a symport by cotransporting sodium. The polypeptide is Excitatory amino acid transporter (glt-1) (Caenorhabditis elegans).